A 998-amino-acid chain; its full sequence is DNA damage-induced apoptosis suppressor protein (998 aa).

The segment at 815-834 (DKQQASPSCPKNIKTPSQKI) is disordered. The segment covering 817–834 (QQASPSCPKNIKTPSQKI) has biased composition (polar residues).

Highly expressed in colorectal and lung cancer tissues.

The protein localises to the cytoplasm. The protein resides in the nucleus. Functionally, may be an anti-apoptotic protein involved in DNA repair or cell survival. The polypeptide is DNA damage-induced apoptosis suppressor protein (DDIAS) (Homo sapiens (Human)).